Consider the following 53-residue polypeptide: UPF0391 membrane protein Bxeno_A2958 (53 aa).

The next 2 membrane-spanning stretches (helical) occupy residues 5-25 (AIVFFVIAIIAAVFGFTGIAA) and 30-50 (IAKILFYIFLVVFVVTLLLGV).

This sequence belongs to the UPF0391 family.

The protein localises to the cell membrane. The protein is UPF0391 membrane protein Bxeno_A2958 of Paraburkholderia xenovorans (strain LB400).